Here is a 253-residue protein sequence, read N- to C-terminus: tRNA (guanine-N(1)-)-methyltransferase (253 aa).

Residues G116 and 136-141 (VGDYIL) each bind S-adenosyl-L-methionine.

The protein belongs to the RNA methyltransferase TrmD family. As to quaternary structure, homodimer.

It localises to the cytoplasm. The catalysed reaction is guanosine(37) in tRNA + S-adenosyl-L-methionine = N(1)-methylguanosine(37) in tRNA + S-adenosyl-L-homocysteine + H(+). Its function is as follows. Specifically methylates guanosine-37 in various tRNAs. This Colwellia psychrerythraea (strain 34H / ATCC BAA-681) (Vibrio psychroerythus) protein is tRNA (guanine-N(1)-)-methyltransferase.